The chain runs to 484 residues: Deoxyribodipyrimidine photo-lyase (484 aa).

One can recognise a Photolyase/cryptochrome alpha/beta domain in the interval 3-132 (APILFWHRRD…RAVQLWDQLL (130 aa)). Residues 36-38 (CLD), R51, and 101-109 (DIEPYGRDR) each bind coenzyme F420-(gamma-Glu)n. The interval 141–148 (GSGNPYSV) is DNA-binding. Residue Y228 participates in FAD binding. R232 is a binding site for DNA. 240–247 (TSGLSPAL) lines the FAD pocket. Coenzyme F420-(gamma-Glu)n is bound at residue K248. 2 interaction with DNA regions span residues 283-290 (ELAWREFY) and 349-350 (NR). FAD contacts are provided by residues 346-352 (WMHNRCW), 380-382 (DGD), and N386. Residues Q411 and K472 each contribute to the DNA site.

Belongs to the DNA photolyase class-1 family. In terms of assembly, monomer. Requires FAD as cofactor. The cofactor is coenzyme F420-(gamma-Glu)n.

The enzyme catalyses cyclobutadipyrimidine (in DNA) = 2 pyrimidine residues (in DNA).. Functionally, involved in repair of UV radiation-induced DNA damage. Catalyzes the light-dependent monomerization (300-600 nm) of cyclobutyl pyrimidine dimers (in cis-syn configuration), which are formed between adjacent bases on the same DNA strand upon exposure to ultraviolet radiation. This is Deoxyribodipyrimidine photo-lyase (phr) from Synechococcus sp. (strain ATCC 27144 / PCC 6301 / SAUG 1402/1) (Anacystis nidulans).